The primary structure comprises 633 residues: Biosynthetic arginine decarboxylase (633 aa).

N6-(pyridoxal phosphate)lysine is present on Lys-101. 284-294 (VDVGGGLGVDY) is a substrate binding site.

This sequence belongs to the Orn/Lys/Arg decarboxylase class-II family. SpeA subfamily. It depends on Mg(2+) as a cofactor. Pyridoxal 5'-phosphate serves as cofactor.

The catalysed reaction is L-arginine + H(+) = agmatine + CO2. It functions in the pathway amine and polyamine biosynthesis; agmatine biosynthesis; agmatine from L-arginine: step 1/1. Catalyzes the biosynthesis of agmatine from arginine. The sequence is that of Biosynthetic arginine decarboxylase from Aeromonas salmonicida (strain A449).